A 714-amino-acid polypeptide reads, in one-letter code: Probable serine/threonine-protein kinase mkcB (714 aa).

Residues methionine 1–phenylalanine 12 show a composition bias toward basic residues. Disordered regions lie at residues methionine 1 to serine 267 and glycine 281 to proline 349. Over residues glycine 23 to glutamine 35 the composition is skewed to basic and acidic residues. Residues serine 62–leucine 83 show a composition bias toward low complexity. Positions histidine 84–glutamate 94 are enriched in polar residues. Composition is skewed to low complexity over residues leucine 95–leucine 111 and proline 120–threonine 166. The segment covering proline 167–leucine 177 has biased composition (polar residues). Low complexity-rich tracts occupy residues serine 178–threonine 241 and leucine 254–serine 267. The segment covering serine 282 to proline 294 has biased composition (polar residues). 2 stretches are compositionally biased toward low complexity: residues asparagine 300–serine 314 and asparagine 324–asparagine 337. In terms of domain architecture, Protein kinase spans tyrosine 438–isoleucine 687. ATP is bound by residues valine 444 to valine 452 and lysine 467. The active-site Proton acceptor is aspartate 558.

This sequence belongs to the protein kinase superfamily. STE Ser/Thr protein kinase family. STE20 subfamily. Mg(2+) is required as a cofactor. In terms of tissue distribution, expressed at equal levels in prestalk and prespore cells.

The enzyme catalyses L-seryl-[protein] + ATP = O-phospho-L-seryl-[protein] + ADP + H(+). It catalyses the reaction L-threonyl-[protein] + ATP = O-phospho-L-threonyl-[protein] + ADP + H(+). This is Probable serine/threonine-protein kinase mkcB from Dictyostelium discoideum (Social amoeba).